The chain runs to 393 residues: Branched-chain-amino-acid aminotransferase, mitochondrial (393 aa).

Residues 1 to 27 (MAAATLGQVWARKLLPVPWLLCGSKRC) constitute a mitochondrion transit peptide. Residue Tyr-169 participates in substrate binding. Lys-230 is modified (N6-(pyridoxal phosphate)lysine). Lys-322 is modified (N6-acetyllysine).

It belongs to the class-IV pyridoxal-phosphate-dependent aminotransferase family. In terms of assembly, homodimer. Requires pyridoxal 5'-phosphate as cofactor.

Its subcellular location is the mitochondrion. The catalysed reaction is L-leucine + 2-oxoglutarate = 4-methyl-2-oxopentanoate + L-glutamate. It catalyses the reaction L-isoleucine + 2-oxoglutarate = (S)-3-methyl-2-oxopentanoate + L-glutamate. It carries out the reaction L-valine + 2-oxoglutarate = 3-methyl-2-oxobutanoate + L-glutamate. Its function is as follows. Catalyzes the first reaction in the catabolism of the essential branched chain amino acids leucine, isoleucine, and valine. May also function as a transporter of branched chain alpha-keto acids. This chain is Branched-chain-amino-acid aminotransferase, mitochondrial (Bcat2), found in Mus musculus (Mouse).